We begin with the raw amino-acid sequence, 216 residues long: Pyridoxine/pyridoxamine 5'-phosphate oxidase (216 aa).

Substrate contacts are provided by residues Arg-12–Tyr-15 and Lys-70. FMN contacts are provided by residues Arg-65–Lys-70, Tyr-80–Thr-81, Arg-86, Lys-87, and Gln-109. The substrate site is built by Tyr-127, Arg-131, and Ser-135. FMN-binding positions include Gln-144–Ser-145 and Trp-189. Residue Arg-195–His-197 participates in substrate binding. Arg-199 contacts FMN.

This sequence belongs to the pyridoxamine 5'-phosphate oxidase family. As to quaternary structure, homodimer. Requires FMN as cofactor.

The catalysed reaction is pyridoxamine 5'-phosphate + O2 + H2O = pyridoxal 5'-phosphate + H2O2 + NH4(+). The enzyme catalyses pyridoxine 5'-phosphate + O2 = pyridoxal 5'-phosphate + H2O2. It functions in the pathway cofactor metabolism; pyridoxal 5'-phosphate salvage; pyridoxal 5'-phosphate from pyridoxamine 5'-phosphate: step 1/1. It participates in cofactor metabolism; pyridoxal 5'-phosphate salvage; pyridoxal 5'-phosphate from pyridoxine 5'-phosphate: step 1/1. Catalyzes the oxidation of either pyridoxine 5'-phosphate (PNP) or pyridoxamine 5'-phosphate (PMP) into pyridoxal 5'-phosphate (PLP). The chain is Pyridoxine/pyridoxamine 5'-phosphate oxidase from Baumannia cicadellinicola subsp. Homalodisca coagulata.